The chain runs to 158 residues: MSNVFTHINADGNAHMVDVTEKAVTEREARAEAFIEMASTTLEMIMSGSHHKGDVFATARIAGIQAAKKTSDLIPLCHPLMLTKVEVDLEAQPEHNRVRITSLCKLSGKTGVEMEALTAASVAALTIYDMCKAVQKDMVISQVRLLEKRGGKSGHFKV.

Residues 76–78 (LCH) and 114–115 (ME) contribute to the substrate site. The active site involves Asp-129.

It belongs to the MoaC family. Homohexamer; trimer of dimers.

It carries out the reaction (8S)-3',8-cyclo-7,8-dihydroguanosine 5'-triphosphate = cyclic pyranopterin phosphate + diphosphate. The protein operates within cofactor biosynthesis; molybdopterin biosynthesis. Catalyzes the conversion of (8S)-3',8-cyclo-7,8-dihydroguanosine 5'-triphosphate to cyclic pyranopterin monophosphate (cPMP). In Shewanella baltica (strain OS155 / ATCC BAA-1091), this protein is Cyclic pyranopterin monophosphate synthase.